Here is a 291-residue protein sequence, read N- to C-terminus: Bifunctional protein FolD (291 aa).

NADP(+) is bound by residues 168-170 (GRG), Thr-195, and Val-236.

Belongs to the tetrahydrofolate dehydrogenase/cyclohydrolase family. As to quaternary structure, homodimer.

The catalysed reaction is (6R)-5,10-methylene-5,6,7,8-tetrahydrofolate + NADP(+) = (6R)-5,10-methenyltetrahydrofolate + NADPH. The enzyme catalyses (6R)-5,10-methenyltetrahydrofolate + H2O = (6R)-10-formyltetrahydrofolate + H(+). It functions in the pathway one-carbon metabolism; tetrahydrofolate interconversion. In terms of biological role, catalyzes the oxidation of 5,10-methylenetetrahydrofolate to 5,10-methenyltetrahydrofolate and then the hydrolysis of 5,10-methenyltetrahydrofolate to 10-formyltetrahydrofolate. The protein is Bifunctional protein FolD of Bifidobacterium adolescentis (strain ATCC 15703 / DSM 20083 / NCTC 11814 / E194a).